The sequence spans 471 residues: Light-independent protochlorophyllide reductase subunit N (471 aa).

Residues Cys22, Cys47, and Cys107 each coordinate [4Fe-4S] cluster.

Belongs to the BchN/ChlN family. Protochlorophyllide reductase is composed of three subunits; ChlL, ChlN and ChlB. Forms a heterotetramer of two ChlB and two ChlN subunits. The cofactor is [4Fe-4S] cluster.

The protein localises to the plastid. It is found in the chloroplast. It catalyses the reaction chlorophyllide a + oxidized 2[4Fe-4S]-[ferredoxin] + 2 ADP + 2 phosphate = protochlorophyllide a + reduced 2[4Fe-4S]-[ferredoxin] + 2 ATP + 2 H2O. The protein operates within porphyrin-containing compound metabolism; chlorophyll biosynthesis (light-independent). In terms of biological role, component of the dark-operative protochlorophyllide reductase (DPOR) that uses Mg-ATP and reduced ferredoxin to reduce ring D of protochlorophyllide (Pchlide) to form chlorophyllide a (Chlide). This reaction is light-independent. The NB-protein (ChlN-ChlB) is the catalytic component of the complex. In Anthoceros angustus (Hornwort), this protein is Light-independent protochlorophyllide reductase subunit N.